The chain runs to 100 residues: Co-chaperonin GroES (100 aa).

This sequence belongs to the GroES chaperonin family. Heptamer of 7 subunits arranged in a ring. Interacts with the chaperonin GroEL.

It localises to the cytoplasm. Functionally, together with the chaperonin GroEL, plays an essential role in assisting protein folding. The GroEL-GroES system forms a nano-cage that allows encapsulation of the non-native substrate proteins and provides a physical environment optimized to promote and accelerate protein folding. GroES binds to the apical surface of the GroEL ring, thereby capping the opening of the GroEL channel. The protein is Co-chaperonin GroES of Nocardia farcinica (strain IFM 10152).